The sequence spans 692 residues: MARTNPLEKVRNIGIAAHIDAGKTTTTERILFYSGIIHKIGEVHEGTAVTDWMDQERERGITITAAAISTSWKDYQINIIDTPGHVDFTIEVERSMRVLDGVIAVFCSVGGVQPQSETVWRQADRYKVPRIAFINKMDRTGANFYRVHEQMRDRLRANAIAIQLPIGSENDFKGIVDLVRKRAYIYNNDQGTDIQETDIPADLQNQVEEYYTKLVEAVAETDDALMTKYFDGEALTEEEIRSALRQGTIAGTIVPVLCGSAFKNKGVQLMLDAVVDYLPAPTEVPPIQGTLANGDTVERRADDNEPLAALAFKIMADPYGRLTFVRVYSGVLKKGSYVLNATKNKKERISRLVLMKADDRQDVEELRAGDLGAALGLKDTLTGDTITDEGSPVILESLFIPEPVISVAVEPKTKNDMDKLSKALQSLSEEDPTFRVNVDPETNQTVIAGMGELHLEILVDRMLREFKVEANVGAPQVAYRETIRKSVTNVEGKFIRQSGGKGQYGHVVINLEPGEPGTGFEFVSKIVGGVVPKEYIGPAEQGMKESCESGILAGYPLIDVKATLVHGSYHDVDSSEMAFKIAGSMALKEAVLKASPVLLEPMMKVEVEVPEDYIGNVIGDLISRRGQIESQSTEQGLAKVASKVPLATMFGYATDIRSKTQGRGIFTMEFSHYEEVPRSVAETIIAKSKGNA.

The region spanning 8–282 is the tr-type G domain; sequence EKVRNIGIAA…AVVDYLPAPT (275 aa). Residues 17 to 24, 81 to 85, and 135 to 138 each bind GTP; these read AHIDAGKT, DTPGH, and NKMD.

The protein belongs to the TRAFAC class translation factor GTPase superfamily. Classic translation factor GTPase family. EF-G/EF-2 subfamily.

The protein localises to the cytoplasm. Functionally, catalyzes the GTP-dependent ribosomal translocation step during translation elongation. During this step, the ribosome changes from the pre-translocational (PRE) to the post-translocational (POST) state as the newly formed A-site-bound peptidyl-tRNA and P-site-bound deacylated tRNA move to the P and E sites, respectively. Catalyzes the coordinated movement of the two tRNA molecules, the mRNA and conformational changes in the ribosome. This Trichormus variabilis (strain ATCC 29413 / PCC 7937) (Anabaena variabilis) protein is Elongation factor G.